The sequence spans 150 residues: Ribosomal RNA large subunit methyltransferase H (150 aa).

S-adenosyl-L-methionine contacts are provided by residues Ala100 and 118-123 (LSEMTF).

Belongs to the RNA methyltransferase RlmH family. Homodimer.

The protein resides in the cytoplasm. It catalyses the reaction pseudouridine(1915) in 23S rRNA + S-adenosyl-L-methionine = N(3)-methylpseudouridine(1915) in 23S rRNA + S-adenosyl-L-homocysteine + H(+). Functionally, specifically methylates the pseudouridine at position 1915 (m3Psi1915) in 23S rRNA. In Helicobacter pylori (strain J99 / ATCC 700824) (Campylobacter pylori J99), this protein is Ribosomal RNA large subunit methyltransferase H.